Consider the following 367-residue polypeptide: tRNA uridine(34) hydroxylase (367 aa).

Residues 159 to 253 form the Rhodanese domain; that stretch reads EDENSIVVDV…YAHEVSQKGL (95 aa). The Cysteine persulfide intermediate role is filled by Cys213.

Belongs to the TrhO family.

The catalysed reaction is uridine(34) in tRNA + AH2 + O2 = 5-hydroxyuridine(34) in tRNA + A + H2O. Its function is as follows. Catalyzes oxygen-dependent 5-hydroxyuridine (ho5U) modification at position 34 in tRNAs. This Leptospira interrogans serogroup Icterohaemorrhagiae serovar Lai (strain 56601) protein is tRNA uridine(34) hydroxylase.